A 234-amino-acid polypeptide reads, in one-letter code: Chalcone--flavanone isomerase 1 (234 aa).

3 residues coordinate substrate: threonine 50, asparagine 115, and serine 192.

This sequence belongs to the chalcone isomerase family.

The enzyme catalyses a chalcone = a flavanone.. The protein operates within secondary metabolite biosynthesis; flavonoid biosynthesis. Catalyzes the intramolecular cyclization of bicyclic chalcones into tricyclic (S)-flavanones. Responsible for the isomerization of 4,2',4',6'-tetrahydroxychalcone (also termed chalcone) into naringenin. This is Chalcone--flavanone isomerase 1 (CHI1) from Vitis vinifera (Grape).